The chain runs to 219 residues: Thymidylate kinase (219 aa).

Position 7–14 (7–14 (GIDGCGKT)) interacts with ATP.

This sequence belongs to the thymidylate kinase family.

The enzyme catalyses dTMP + ATP = dTDP + ADP. Its function is as follows. Phosphorylation of dTMP to form dTDP in both de novo and salvage pathways of dTTP synthesis. The chain is Thymidylate kinase from Anaplasma phagocytophilum (strain HZ).